The chain runs to 129 residues: Small ribosomal subunit protein uS9 (129 aa).

The protein belongs to the universal ribosomal protein uS9 family.

This is Small ribosomal subunit protein uS9 from Wolinella succinogenes (strain ATCC 29543 / DSM 1740 / CCUG 13145 / JCM 31913 / LMG 7466 / NCTC 11488 / FDC 602W) (Vibrio succinogenes).